A 79-amino-acid polypeptide reads, in one-letter code: MPKLKKLLLKVSTSKPNTNPPSQNEEKGTIVKQEAPIHVSNVALVCPQTQTPTKVGIRIQSGKKVRYAKKSNQTLDEKN.

Residues 1-29 (MPKLKKLLLKVSTSKPNTNPPSQNEEKGT) form a disordered region. The segment covering 11–23 (VSTSKPNTNPPSQ) has biased composition (polar residues).

This sequence belongs to the universal ribosomal protein uL24 family. In terms of assembly, part of the 50S ribosomal subunit.

One of two assembly initiator proteins, it binds directly to the 5'-end of the 23S rRNA, where it nucleates assembly of the 50S subunit. Its function is as follows. One of the proteins that surrounds the polypeptide exit tunnel on the outside of the subunit. The protein is Large ribosomal subunit protein uL24 (rplX) of Onion yellows phytoplasma (strain OY-M).